Reading from the N-terminus, the 210-residue chain is Chloramphenicol acetyltransferase (210 aa).

The active site involves H79.

Belongs to the transferase hexapeptide repeat family.

The enzyme catalyses chloramphenicol + acetyl-CoA = chloramphenicol 3-acetate + CoA. In terms of biological role, this enzyme is an effector of chloramphenicol resistance in bacteria. This Escherichia coli protein is Chloramphenicol acetyltransferase (catB2).